The chain runs to 197 residues: Ycf20-like protein (197 aa).

Helical transmembrane passes span 113-133 (MKIF…TILG), 138-158 (WDVL…MLMY), and 173-193 (FVVF…VDAF).

Belongs to the ycf20 family.

The protein resides in the membrane. This is Ycf20-like protein from Arabidopsis thaliana (Mouse-ear cress).